Here is a 520-residue protein sequence, read N- to C-terminus: Serine/threonine-protein kinases drp72 (520 aa).

One can recognise a Protein kinase domain in the interval 20 to 281 (YTLQWIVGHG…NELARAVSAV (262 aa)). Residues 26–34 (VGHGGMSTV) and K49 contribute to the ATP site. The Proton acceptor role is filled by D148. Disordered regions lie at residues 315–334 (ARPTTSVPASPTVLPERQEK) and 366–504 (SGDS…DAAD). A compositionally biased stretch (low complexity) spans 374 to 394 (TPETITQTVTPTETTTSEEPT). The segment covering 395–411 (LAPPPVQPTRQPVPTPD) has biased composition (pro residues). Residues 416–429 (RLPTTTQESPTRVS) are compositionally biased toward polar residues. Low complexity predominate over residues 440 to 449 (EQTTPGGQPP). The span at 450-460 (LSTLPTSLGWQ) shows a compositional bias: polar residues. Over residues 469–484 (QGNPNTTGNPANPGTP) the composition is skewed to low complexity. The span at 485 to 496 (GTTGGNGTGNAG) shows a compositional bias: gly residues.

The protein belongs to the protein kinase superfamily. Ser/Thr protein kinase family.

It carries out the reaction L-seryl-[protein] + ATP = O-phospho-L-seryl-[protein] + ADP + H(+). The enzyme catalyses L-threonyl-[protein] + ATP = O-phospho-L-threonyl-[protein] + ADP + H(+). This chain is Serine/threonine-protein kinases drp72, found in Corynebacterium efficiens (strain DSM 44549 / YS-314 / AJ 12310 / JCM 11189 / NBRC 100395).